A 131-amino-acid polypeptide reads, in one-letter code: uncharacterized protein (131 aa).

The disordered stretch occupies residues 16–71; the sequence is MSEQERDEVLEDDDDDEDNKSSQQERDEFVEDDDNNSIQSSPSCAQPLLTQYHDDG. Over residues 20–33 the composition is skewed to acidic residues; that stretch reads ERDEVLEDDDDDED.

This is an uncharacterized protein from Dictyostelium discoideum (Social amoeba).